The sequence spans 168 residues: Cell division inhibitor SulA (168 aa).

The interval 1-20 (MSTQSVSSHNIESSSFSANQ) is disordered. Residues 105-111 (ALLTGNY) are ftsZ binding. The segment at 161 to 168 (KIHSTLYH) is lon protease binding.

It belongs to the SulA family. In terms of assembly, interacts with FtsZ. Is rapidly cleaved and degraded by the Lon protease once DNA damage is repaired.

Its function is as follows. Component of the SOS system and an inhibitor of cell division. Accumulation of SulA causes rapid cessation of cell division and the appearance of long, non-septate filaments. In the presence of GTP, binds a polymerization-competent form of FtsZ in a 1:1 ratio, thus inhibiting FtsZ polymerization and therefore preventing it from participating in the assembly of the Z ring. This mechanism prevents the premature segregation of damaged DNA to daughter cells during cell division. This chain is Cell division inhibitor SulA, found in Pectobacterium atrosepticum (strain SCRI 1043 / ATCC BAA-672) (Erwinia carotovora subsp. atroseptica).